Consider the following 138-residue polypeptide: Large ribosomal subunit protein uL16 (138 aa).

It belongs to the universal ribosomal protein uL16 family. As to quaternary structure, part of the 50S ribosomal subunit.

Functionally, binds 23S rRNA and is also seen to make contacts with the A and possibly P site tRNAs. This Mycoplasmoides gallisepticum (strain R(low / passage 15 / clone 2)) (Mycoplasma gallisepticum) protein is Large ribosomal subunit protein uL16.